We begin with the raw amino-acid sequence, 120 residues long: Large ribosomal subunit protein uL18 (120 aa).

It belongs to the universal ribosomal protein uL18 family. Part of the 50S ribosomal subunit; part of the 5S rRNA/L5/L18/L25 subcomplex. Contacts the 5S and 23S rRNAs.

This is one of the proteins that bind and probably mediate the attachment of the 5S RNA into the large ribosomal subunit, where it forms part of the central protuberance. The chain is Large ribosomal subunit protein uL18 from Clostridium novyi (strain NT).